Consider the following 76-residue polypeptide: Precursor of CEP7 (76 aa).

Residues 1 to 27 (MAKCTLTSLILLLIVLVLIQESHIVEG) form the signal peptide. The propeptide occupies 28–61 (RPLKSSRISNVSKKFAAGNSNLSSKLTTEDHSLD). Asn-37 and Asn-48 each carry an N-linked (GlcNAc...) asparagine glycan. The tract at residues 49–76 (LSSKLTTEDHSLDAFRPTNPGNSPGIGH) is disordered. Residues Pro-65, Pro-68, and Pro-72 each carry the hydroxyproline modification.

The protein belongs to the C-terminally encoded plant signaling peptide (CEP) family. In terms of assembly, interacts with CEP receptors (e.g. CEPR1 and CEPR2). In terms of processing, the mature small signaling peptide is generated by proteolytic processing of the longer precursor.

It localises to the secreted. Its subcellular location is the extracellular space. The protein resides in the apoplast. Functionally, extracellular signaling peptide that may regulate primary root growth rate and systemic nitrogen (N)-demand signaling. Mediates up-regulation of genes involved in N uptake and assimilation pathways. This is Precursor of CEP7 from Arabidopsis thaliana (Mouse-ear cress).